The sequence spans 311 residues: MCVIMGDFTDLDRQIEQLRRCELIKENEVKALCAKAREILVEESNVQSVDSPVTVCGDIHGQFYDLKELFRVGGEVPETNYLFMGDFVDRGFYSVETFLLLLALKVRYPDRITLIRGNHESRQITQVYGFFDECHRKYGSATVWRYCTEIFDYLSLSAIVDGKIFCVHGGLSPSIQTLDQIRTIDRKQEVPHDGPMCDLLWSDPEDTTGWGVSPRGAGYLFGSDVVAQFNAANDISMICRAHQLVMEGYKWHFNDTVLTVWSAPNYCYRCGNVAAILELDEHLQKEFIIFEAAPQETRGLPSKKPVADYFL.

Positions 58, 60, 86, and 118 each coordinate Mn(2+). Catalysis depends on His119, which acts as the Proton donor. The Mn(2+) site is built by His168 and His242. Leucine methyl ester is present on Leu311.

It belongs to the PPP phosphatase family. PP-4 (PP-X) subfamily. In terms of assembly, serine/threonine-protein phosphatase 4 (PP4) occurs in different assemblies of the catalytic and one or more regulatory subunits. It depends on Mn(2+) as a cofactor.

The protein resides in the cytoplasm. It is found in the cytoskeleton. Its subcellular location is the microtubule organizing center. The protein localises to the centrosome. The enzyme catalyses O-phospho-L-seryl-[protein] + H2O = L-seryl-[protein] + phosphate. The catalysed reaction is O-phospho-L-threonyl-[protein] + H2O = L-threonyl-[protein] + phosphate. Its function is as follows. Protein phosphatase that regulates many processes such as microtubule organization at centrosomes. The polypeptide is Serine/threonine-protein phosphatase 4 catalytic subunit A (ppp4ca) (Danio rerio (Zebrafish)).